Here is a 192-residue protein sequence, read N- to C-terminus: Probable nicotinate-nucleotide adenylyltransferase (192 aa).

Belongs to the NadD family.

It carries out the reaction nicotinate beta-D-ribonucleotide + ATP + H(+) = deamido-NAD(+) + diphosphate. It participates in cofactor biosynthesis; NAD(+) biosynthesis; deamido-NAD(+) from nicotinate D-ribonucleotide: step 1/1. In terms of biological role, catalyzes the reversible adenylation of nicotinate mononucleotide (NaMN) to nicotinic acid adenine dinucleotide (NaAD). This chain is Probable nicotinate-nucleotide adenylyltransferase, found in Rhizobium leguminosarum bv. trifolii (strain WSM2304).